We begin with the raw amino-acid sequence, 581 residues long: mRNA-decapping enzyme 1B (581 aa).

Position 145 is a phosphoserine (serine 145). Disordered regions lie at residues glutamine 181–glutamine 222 and alanine 236–phenylalanine 258. Over residues glycine 204–proline 219 the composition is skewed to polar residues. A compositionally biased stretch (low complexity) spans proline 244–proline 255. Serine 269 and serine 326 each carry phosphoserine. Residues alanine 349–valine 411 are disordered. Positions proline 355–proline 367 are enriched in low complexity. Threonine 366 bears the Phosphothreonine mark. The segment covering valine 368–proline 381 has biased composition (polar residues). Residues proline 382 to glycine 401 show a composition bias toward pro residues. Residue serine 412 is modified to Phosphoserine. The segment at glutamine 427 to alanine 468 is disordered. Serine 475 bears the Phosphoserine mark. Positions serine 498–threonine 522 are disordered.

Belongs to the DCP1 family. In terms of assembly, interacts with DCP1A.

Its subcellular location is the cytoplasm. It is found in the nucleus. It catalyses the reaction a 5'-end (N(7)-methyl 5'-triphosphoguanosine)-ribonucleoside in mRNA + H2O = N(7)-methyl-GDP + a 5'-end phospho-ribonucleoside in mRNA + 2 H(+). Its function is as follows. May play a role in the degradation of mRNAs, both in normal mRNA turnover and in nonsense-mediated mRNA decay. May remove the 7-methyl guanine cap structure from mRNA molecules, yielding a 5'-phosphorylated mRNA fragment and 7m-GDP. This Bos taurus (Bovine) protein is mRNA-decapping enzyme 1B (DCP1B).